A 167-amino-acid polypeptide reads, in one-letter code: I-Kappa-B like protein F2 (167 aa).

ANK repeat units lie at residues 54–86 (HGKQ…DING), 91–121 (FGNT…NMGI), and 125–154 (LFKT…RCGV).

The protein belongs to the polydnaviridae I-Kappa-B-like protein family.

Functionally, suppresses the host immune response through NF-kappa-B inactivation. Possesses ankyrin repeat domains required for NF-kappa-B binding but lacks the regulatory regions required for dissociation from NF-kappa-B and degradation. Therefore, prevents host NF-kappa-B release and subsequent activation. This Microplitis demolitor bracovirus (isolate Webb) (MdBV) protein is I-Kappa-B like protein F2 (F3).